We begin with the raw amino-acid sequence, 609 residues long: Hemagglutinin/proteinase (609 aa).

Positions 1–24 are cleaved as a signal peptide; it reads MKMIQRPLNWLVLAGAATGFPLYA. The propeptide occupies 25 to 196; the sequence is AQMVTIDDAS…LDQWDGINHA (172 aa). Position 343 (His343) interacts with Zn(2+). Glu344 is a catalytic residue. Zn(2+)-binding residues include His347 and Glu367. His426 functions as the Proton donor in the catalytic mechanism.

The protein belongs to the peptidase M4 family. It depends on Zn(2+) as a cofactor.

The protein localises to the secreted. In terms of biological role, may play a role in the pathogenesis of cholera. Hap nicks and activates the A subunit of cholera enterotoxin and related enterotoxins. This is Hemagglutinin/proteinase (hap) from Vibrio cholerae serotype O1 (strain ATCC 39315 / El Tor Inaba N16961).